The sequence spans 2080 residues: MAASERRAFAHKINRTVAAEVRKQVSRERSGSPHSSRRSSSSLGVPLTEVIEPLDFEDVLLSRPPEVEPGPLRDLIEFPVDDLELLKQPRECRTTESGVPEDGQLDAQVRAAVEMYSEDWVIVRRRYQHLSTAYSPITTETQREWQKGLTCQVFEQDTPGDERTGPEDVDDPQHCSGSPEDTPRSSGASGIFSLRNLAADSLLPTLLEQAAPEDVDRRNEALRRQHRAPTLLTLYPAPDEDEAVERCSRPEPPREHFGQRILVKCLSLKFEIEIEPIFGTLALYDVREKKKISENFYFDLNSDSVKGLLRAHGTHPAISTLARSAIFSVTYPSPDIFLVVKLEKVLQQGDISECCEPYMVMKEADTAKNKEKLEKLRLAAEQFCTRLGRYRMPFAWTAVHLANIVSRPQDRDSDSEGERRPTWAERRRRGPQDRGYSGDDACSFSSFRPATLTVTNFFKQEAERLSDEDLFKFLADMRRPSSLLRRLRPVTAQLKLDISPAPENLHFCLSPDLLHVKPYPDPRGRPTKEILEFPAREVYAPHSCYRNLLFVYPHSLNFSSRQGSVRNLAVRIQYMAGEDQSQALPVIFGKSSCSEFTREAFTPVVYHNKSPEFYEEFKLRLPACVTENHHLFFTFYHVSCQPRPGTALETPVGFTWIPLLQHGRLRTGPFCLPVSVDQPPPSYSVLTPDVALPGMRWVDGHKGVFSVELTAVSSVHPQDPHLDKFFTLVHVLEEGIFPFRLKETVLSEGTMEQELRASLAALRLASPEPLVAFSHLVLDKLVRLVVRPPIICGQMVNLGRGAFEAMAHVASLVHRNLEAVQDSRGHCPLLASYVHYAFRLPGGDLSLPGEAPPATVQAATLARGSGRPASLYLARSKSISSSNPDLAVVPGSVDDEVSRILASKGVDRSHSWVNSAYAPGGSKAVLRRVPPYCGADPRQLLHEELALQWVVSGSAVRELVLQHAWFFFQLMVKSMELHLLLGQRLDTPRKLRFPGRFLDDIAALVASVGLEVITRVHKDMKLAERLNASLAFFLSDLLSIADRGYIFSLVRAHYKQVATRLQSAPNPTALLTLRMDFTRILCSHEHYVTLNLPCCPLSPPASPSPSVSSTTSQSSTFSSQAPDPKVTSMFELSGPFRQQHFLSGLLLTELALALDPEAEGASLLHKKAISAVHSLLCSHDVDSRYAEATVKAKVAELYLPLLSLARDTLPQLHGFAEGSGQRSRLASMLDSDTEGEGDIGSTINPSVAMAIAGGPLAPGSRTSISQGPSTAARSGCPLSAESSRTLLVCVLWVLKNAEPTLLQRWAADLALPQLGRLLDLLYLCLAAFEYKGKKAFERINSLTFKKSLDMKARLEEAILGTIGARQEMVRRSRERSPFGNQENVRWRKSATHWRQTSDRVDKTKDEMEHEALVDGNLATEASLVVLDTLETIVQTVMLSEARESILSAVLKVVLYSLGSAQSALFLQHGLATQRALVSKFPELLFEEDTELCADLCLRLLRHCGSRISTIRMHASASLYLLMRQNFEIGHNFARVKMLVTMSLSSLVGTTQNFSEEHLRKSLKTILTYAEEDIGLRDSTFAEQVQDLMFNLHMILTDTVKMKEHQEDPEMLMDLMYRIARGYQGSPDLRLTWLQNMAGKHAELGNHAEAAQCMVHAAALVAEYLALLEDSRHLPVGCVSFQNVSSNVLEESAISDDILSPDEEGFCSGKNFTELGLVGLLEQAAGYFTMGGLYEAVNEVYKNLIPILEAHRDYKKLAAVHGKLQEAFTKIMHQSSGWERVFGTYFRVGFYGTRFGDLDEQEFVYKEPSITKLAEISHRLEEFYTERFGDDVVEIIKDSNPVDKSKLDPQKAYIQITYVEPHFDTYELKDRVTYFDRNYGLRAFLFCTPFTPDGRAHGELAEQHKRKTLLSTEHAFPYIKTRIRVCHREETVLTPVEVAIEDMQKKTRELAFATEQDPPDAKMLQMVLQGSVGPTVNQGPLEVAQVFLSEIPEDPKLFRHHNKLRLCFKDFCKKCEDALRKNKALIGPDQKEYHRELERHYSRLREALQPLLTQRLPQLLAPSSTSLRSSMNRSSFRKADL.

Residues 20 to 31 (EVRKQVSRERSG) are compositionally biased toward basic and acidic residues. 3 disordered regions span residues 20–44 (EVRK…SSLG), 156–189 (QDTP…SGAS), and 408–441 (PQDR…GDDA). A compositionally biased stretch (low complexity) spans 32-42 (SPHSSRRSSSS). Phosphoserine is present on Ser178. Basic and acidic residues predominate over residues 408–425 (PQDRDSDSEGERRPTWAE). The C2 DOCK-type domain maps to 546–712 (RNLLFVYPHS…GVFSVELTAV (167 aa)). Arg863 bears the Omega-N-methylarginine mark. A phosphoserine mark is found at Ser870, Ser878, and Ser882. Positions 1101–1123 (ASPSPSVSSTTSQSSTFSSQAPD) are disordered. Residues 1104 to 1122 (SPSVSSTTSQSSTFSSQAP) show a composition bias toward low complexity. At Ser1341 the chain carries Phosphoserine. The 437-residue stretch at 1620-2056 (RGYQGSPDLR…LQPLLTQRLP (437 aa)) folds into the DOCKER domain. The residue at position 2064 (Thr2064) is a Phosphothreonine. Residues Ser2065 and Ser2069 each carry the phosphoserine modification.

Belongs to the DOCK family. In terms of tissue distribution, widely expressed with highest levels in lung and heart.

Its subcellular location is the cytoplasm. It is found in the perinuclear region. In terms of biological role, acts as a guanine nucleotide exchange factor (GEF) for CDC42 and RAC1 small GTPases. Through its activation of CDC42 and RAC1, regulates neurite outgrowth in an vitro differentiation system. This chain is Dedicator of cytokinesis protein 6 (Dock6), found in Mus musculus (Mouse).